A 175-amino-acid chain; its full sequence is NAD(P)H-quinone oxidoreductase subunit I, chloroplastic (175 aa).

2 4Fe-4S ferredoxin-type domains span residues 55 to 84 (GRIH…VNWE) and 95 to 124 (QTYS…MTEE). Residues C64, C67, C70, C74, C104, C107, C110, and C114 each contribute to the [4Fe-4S] cluster site.

It belongs to the complex I 23 kDa subunit family. As to quaternary structure, NDH is composed of at least 16 different subunits, 5 of which are encoded in the nucleus. [4Fe-4S] cluster serves as cofactor.

Its subcellular location is the plastid. It is found in the chloroplast thylakoid membrane. It carries out the reaction a plastoquinone + NADH + (n+1) H(+)(in) = a plastoquinol + NAD(+) + n H(+)(out). It catalyses the reaction a plastoquinone + NADPH + (n+1) H(+)(in) = a plastoquinol + NADP(+) + n H(+)(out). Its function is as follows. NDH shuttles electrons from NAD(P)H:plastoquinone, via FMN and iron-sulfur (Fe-S) centers, to quinones in the photosynthetic chain and possibly in a chloroplast respiratory chain. The immediate electron acceptor for the enzyme in this species is believed to be plastoquinone. Couples the redox reaction to proton translocation, and thus conserves the redox energy in a proton gradient. The protein is NAD(P)H-quinone oxidoreductase subunit I, chloroplastic of Chlorokybus atmophyticus (Soil alga).